The primary structure comprises 640 residues: Threonine--tRNA ligase (640 aa).

Positions 1–61 (MPIITLPDGS…TNDAEIQIIT (61 aa)) constitute a TGS domain. Residues 242–533 (DHRKLGKKLS…LIENYSGNLP (292 aa)) are catalytic. Zn(2+) is bound by residues Cys-333, His-384, and His-510.

It belongs to the class-II aminoacyl-tRNA synthetase family. In terms of assembly, homodimer. Zn(2+) is required as a cofactor.

It is found in the cytoplasm. The enzyme catalyses tRNA(Thr) + L-threonine + ATP = L-threonyl-tRNA(Thr) + AMP + diphosphate + H(+). Functionally, catalyzes the attachment of threonine to tRNA(Thr) in a two-step reaction: L-threonine is first activated by ATP to form Thr-AMP and then transferred to the acceptor end of tRNA(Thr). Also edits incorrectly charged L-seryl-tRNA(Thr). This is Threonine--tRNA ligase from Prochlorococcus marinus (strain NATL1A).